The following is a 475-amino-acid chain: Peripherin (475 aa).

The interval methionine 1–serine 42 is disordered. Positions methionine 1 to glutamine 103 are head. A compositionally biased stretch (low complexity) spans glycine 14 to arginine 26. A 3'-nitrotyrosine modification is found at tyrosine 24. Serine 35 and serine 57 each carry phosphoserine. Position 66 is a phosphoserine; by PKB/AKT1 (serine 66). Residues glutamate 101 to isoleucine 411 form the IF rod domain. The tract at residues glutamate 104–alanine 136 is coil 1A. Residues arginine 137–leucine 147 form a linker 1 region. The interval cysteine 148–leucine 243 is coil 1B. A linker 2 region spans residues glutamine 244–threonine 266. Residues alanine 267–serine 409 form a coil 2 region. Tyrosine 383 bears the 3'-nitrotyrosine mark. A tail region spans residues arginine 410–tyrosine 475. Positions glutamate 453 to tyrosine 475 are disordered. Tyrosine 475 carries the phosphotyrosine modification.

The protein belongs to the intermediate filament family. Forms homodimers (in vitro). Homopolymerizes into a filamentous network (in vitro). Forms heterodimers with NEFL, NEFM or NEFH (in vitro). Interacts with DST (via C-terminus). Interacts with RAB7A; the interaction is direct. Interacts with PRKCE (via phorbol-ester/DAG-type 2 domain). In terms of processing, phosphorylated; phosphorylation increases after nerve injury in regenerating neurons. As to expression, expressed in the sciatic nerve and at very low levels in the central nervous system (at protein level). Expressed in the spinal cord, in the sciatic nerve at the level of the dorsal root ganglion and in trigeminal nerves (at protein level). Expressed in the cranial nerves in the hindbrain, including the sensory and motor trigeminal neurons, the mesencephalic trigeminal neurons, the spinal trigeminal neurons, and in the facial nerve (at protein level). Expressed in the cerebellum, with expression in the inferior cerebellar peduncle and the lateral deep cerebellar nucleus (at protein level). Expressed in vestibulocochlear neurons, such as the anteroventral cochlear nucleus, the dorsal cochlear nucleus, the superficial granule cell layer and the granule cell lamina (at protein level). Expressed in glossopharyngeal, vagal and hypoglossal neurons (at protein level). Expressed in peripheral sensory neurons, in the dorsal root ganglia and the spinal cord, and to a lower extent in motor neurons. Expressed in the optic tract of the central nervous system, especially in the lateral geniculate nucleus and the superior colliculus. Expressed in neurons of the pineal stalk in the cortex. Expressed in the spinal trigeminal tract of the midbrain, in the medulla and in the medial cerebellar peduncle.

The protein resides in the cytoplasm. It is found in the cytoskeleton. Its subcellular location is the cell projection. The protein localises to the axon. It localises to the perikaryon. Class-III neuronal intermediate filament protein. May form an independent structural network without the involvement of other neurofilaments or may cooperate with the neuronal intermediate filament proteins NEFL, NEFH, NEFM and INA to form filamentous networks. Assembly of the neuronal intermediate filaments may be regulated by RAB7A. Plays a role in the development of unmyelinated sensory neurons. May be involved in axon elongation and axon regeneration after injury. Inhibits neurite extension in type II spiral ganglion neurons in the cochlea. This Mus musculus (Mouse) protein is Peripherin (Prph).